The primary structure comprises 628 residues: DNA primase (628 aa).

The CHC2-type zinc finger occupies 40–64 (CPFHEERSPSFSVAEDKQIFHCFGC). The 83-residue stretch at 269 to 351 (NTVLLFEGFM…DLSIVSIPEK (83 aa)) folds into the Toprim domain. Residues Glu275, Asp319, and Asp321 each coordinate Mg(2+).

Belongs to the DnaG primase family. As to quaternary structure, monomer. Interacts with DnaB. It depends on Zn(2+) as a cofactor. Mg(2+) is required as a cofactor.

The catalysed reaction is ssDNA + n NTP = ssDNA/pppN(pN)n-1 hybrid + (n-1) diphosphate.. In terms of biological role, RNA polymerase that catalyzes the synthesis of short RNA molecules used as primers for DNA polymerase during DNA replication. The polypeptide is DNA primase (Enterococcus faecalis (strain ATCC 700802 / V583)).